A 217-amino-acid polypeptide reads, in one-letter code: Large ribosomal subunit protein bL25 (217 aa).

A compositionally biased stretch (low complexity) spans 195 to 211 (PAEGAAAAPAKGAAKGA). The segment at 195–217 (PAEGAAAAPAKGAAKGAAKGGKK) is disordered.

The protein belongs to the bacterial ribosomal protein bL25 family. CTC subfamily. In terms of assembly, part of the 50S ribosomal subunit; part of the 5S rRNA/L5/L18/L25 subcomplex. Contacts the 5S rRNA. Binds to the 5S rRNA independently of L5 and L18.

In terms of biological role, this is one of the proteins that binds to the 5S RNA in the ribosome where it forms part of the central protuberance. The chain is Large ribosomal subunit protein bL25 from Acidiphilium cryptum (strain JF-5).